A 233-amino-acid polypeptide reads, in one-letter code: Large ribosomal subunit protein uL1 (233 aa).

It belongs to the universal ribosomal protein uL1 family. In terms of assembly, part of the 50S ribosomal subunit.

Binds directly to 23S rRNA. The L1 stalk is quite mobile in the ribosome, and is involved in E site tRNA release. In terms of biological role, protein L1 is also a translational repressor protein, it controls the translation of the L11 operon by binding to its mRNA. This is Large ribosomal subunit protein uL1 from Psychrobacter sp. (strain PRwf-1).